The following is a 213-amino-acid chain: HTH-type transcriptional regulator SrpR (213 aa).

One can recognise an HTH tetR-type domain in the interval 10 to 70; sequence EETRQRIIDA…AVLASRQHPL (61 aa). Positions 33-52 form a DNA-binding region, H-T-H motif; it reads TLDQIARKAGVTRGAVYWHF.

In terms of biological role, in conjunction with SrpS represses the srpABC operon. This Pseudomonas putida (Arthrobacter siderocapsulatus) protein is HTH-type transcriptional regulator SrpR (srpR).